The sequence spans 289 residues: Mas-related G-protein coupled receptor member G (289 aa).

Topologically, residues 1–13 (MFGLFGLWRTFDS) are extracellular. Residues 14 to 34 (VVFYLTLIVGLGGPVGNGLVL) form a helical membrane-spanning segment. At 35–42 (WNLGFRIK) the chain is on the cytoplasmic side. The helical transmembrane segment at 43 to 63 (KGPFSIYLLHLAAADFLFLSC) threads the bilayer. The Extracellular segment spans residues 64–78 (RVGFSVAQAALGAQD). The helical transmembrane segment at 79 to 99 (TLYFVLTFLWFAVGLWLLAAF) threads the bilayer. At 100-120 (SVERCLSDLFPACYQGCRPRH) the chain is on the cytoplasmic side. A helical membrane pass occupies residues 121–141 (ASAVLCALVWTPTLPAVPLPA). Residues 142 to 163 (NACGLLRNSACPLVCPRYHVAS) lie on the Extracellular side of the membrane. The chain crosses the membrane as a helical span at residues 164–184 (VTWFLVLARVAWTAGVVLFVW). Over 185 to 195 (VTCCSTRPRPR) the chain is Cytoplasmic. Residues 196 to 216 (LYGIVLGALLLLFFCGLPSVF) form a helical membrane-spanning segment. The Extracellular portion of the chain corresponds to 217–221 (YWSLQ). The helical transmembrane segment at 222–242 (PLLNFLLPVFSPLATLLACVN) threads the bilayer. At 243-289 (SSSKPLIYSGLGRQPGKREPLRSVLRRALGEGAELGARGQSLPMGLL) the chain is on the cytoplasmic side.

It belongs to the G-protein coupled receptor 1 family. Mas subfamily.

The protein resides in the cell membrane. Its function is as follows. Orphan receptor. May regulate nociceptor function and/or development, including the sensation or modulation of pain. This is Mas-related G-protein coupled receptor member G (MRGPRG) from Homo sapiens (Human).